Here is a 196-residue protein sequence, read N- to C-terminus: ATP-dependent Clp protease proteolytic subunit (196 aa).

Ser96 functions as the Nucleophile in the catalytic mechanism. His121 is an active-site residue.

Belongs to the peptidase S14 family. Fourteen ClpP subunits assemble into 2 heptameric rings which stack back to back to give a disk-like structure with a central cavity, resembling the structure of eukaryotic proteasomes.

It localises to the cytoplasm. It carries out the reaction Hydrolysis of proteins to small peptides in the presence of ATP and magnesium. alpha-casein is the usual test substrate. In the absence of ATP, only oligopeptides shorter than five residues are hydrolyzed (such as succinyl-Leu-Tyr-|-NHMec, and Leu-Tyr-Leu-|-Tyr-Trp, in which cleavage of the -Tyr-|-Leu- and -Tyr-|-Trp bonds also occurs).. Its function is as follows. Cleaves peptides in various proteins in a process that requires ATP hydrolysis. Has a chymotrypsin-like activity. Plays a major role in the degradation of misfolded proteins. The polypeptide is ATP-dependent Clp protease proteolytic subunit (Streptococcus mutans serotype c (strain ATCC 700610 / UA159)).